The primary structure comprises 322 residues: 4-diphosphocytidyl-2-C-methyl-D-erythritol kinase (322 aa).

The active site involves Lys-18. 130 to 140 is a binding site for ATP; the sequence is PMGAGLGGGSS. Asp-172 is an active-site residue.

The protein belongs to the GHMP kinase family. IspE subfamily.

It carries out the reaction 4-CDP-2-C-methyl-D-erythritol + ATP = 4-CDP-2-C-methyl-D-erythritol 2-phosphate + ADP + H(+). The protein operates within isoprenoid biosynthesis; isopentenyl diphosphate biosynthesis via DXP pathway; isopentenyl diphosphate from 1-deoxy-D-xylulose 5-phosphate: step 3/6. In terms of biological role, catalyzes the phosphorylation of the position 2 hydroxy group of 4-diphosphocytidyl-2C-methyl-D-erythritol. The chain is 4-diphosphocytidyl-2-C-methyl-D-erythritol kinase from Psychrobacter arcticus (strain DSM 17307 / VKM B-2377 / 273-4).